We begin with the raw amino-acid sequence, 195 residues long: Small ribosomal subunit protein uS4 (195 aa).

In terms of domain architecture, S4 RNA-binding spans 109-183 (RRLQTQVFKL…VKRKNLKKNQ (75 aa)). The segment at 165 to 195 (PFGGGRPGRVKRKNLKKNQGGGGGAAEEEED) is disordered.

The protein belongs to the universal ribosomal protein uS4 family. As to quaternary structure, component of the small ribosomal subunit. Identified in a IGF2BP1-dependent mRNP granule complex containing untranslated mRNAs. Part of the small subunit (SSU) processome, composed of more than 70 proteins and the RNA chaperone small nucleolar RNA (snoRNA) U3.

The protein localises to the cytoplasm. The protein resides in the nucleus. It localises to the nucleolus. In terms of biological role, component of the small ribosomal subunit. The ribosome is a large ribonucleoprotein complex responsible for the synthesis of proteins in the cell. Part of the small subunit (SSU) processome, first precursor of the small eukaryotic ribosomal subunit. During the assembly of the SSU processome in the nucleolus, many ribosome biogenesis factors, an RNA chaperone and ribosomal proteins associate with the nascent pre-rRNA and work in concert to generate RNA folding, modifications, rearrangements and cleavage as well as targeted degradation of pre-ribosomal RNA by the RNA exosome. This chain is Small ribosomal subunit protein uS4, found in Drosophila melanogaster (Fruit fly).